A 249-amino-acid polypeptide reads, in one-letter code: LexA repressor (249 aa).

The segment at 1-26 (MAAQATGGRATQRSQQSPAKPKGLTV) is disordered. Residues 9–18 (RATQRSQQSP) are compositionally biased toward polar residues. Positions 48 to 68 (MREIGDTVGLASLSSVTHQLS) form a DNA-binding region, H-T-H motif. Catalysis depends on for autocatalytic cleavage activity residues S173 and K210.

This sequence belongs to the peptidase S24 family. In terms of assembly, homodimer.

It carries out the reaction Hydrolysis of Ala-|-Gly bond in repressor LexA.. In terms of biological role, represses a number of genes involved in the response to DNA damage (SOS response), including recA and lexA. In the presence of single-stranded DNA, RecA interacts with LexA causing an autocatalytic cleavage which disrupts the DNA-binding part of LexA, leading to derepression of the SOS regulon and eventually DNA repair. This chain is LexA repressor, found in Arthrobacter sp. (strain FB24).